Reading from the N-terminus, the 130-residue chain is Small ribosomal subunit protein uS8A (130 aa).

The protein belongs to the universal ribosomal protein uS8 family. As to quaternary structure, component of the small ribosomal subunit (SSU). Mature ribosomes consist of a small (40S) and a large (60S) subunit. The 40S subunit contains about 32 different proteins and 1 molecule of RNA (18S). The 60S subunit contains 45 different proteins and 3 molecules of RNA (25S, 5.8S and 5S).

Its subcellular location is the cytoplasm. In terms of biological role, component of the ribosome, a large ribonucleoprotein complex responsible for the synthesis of proteins in the cell. The small ribosomal subunit (SSU) binds messenger RNAs (mRNAs) and translates the encoded message by selecting cognate aminoacyl-transfer RNA (tRNA) molecules. The large subunit (LSU) contains the ribosomal catalytic site termed the peptidyl transferase center (PTC), which catalyzes the formation of peptide bonds, thereby polymerizing the amino acids delivered by tRNAs into a polypeptide chain. The nascent polypeptides leave the ribosome through a tunnel in the LSU and interact with protein factors that function in enzymatic processing, targeting, and the membrane insertion of nascent chains at the exit of the ribosomal tunnel. The protein is Small ribosomal subunit protein uS8A (RPS22A) of Candida albicans (strain SC5314 / ATCC MYA-2876) (Yeast).